Here is a 713-residue protein sequence, read N- to C-terminus: BBSome complex assembly protein BBS10 (713 aa).

The protein belongs to the TCP-1 chaperonin family. In terms of assembly, component of a complex composed at least of MKKS, BBS10, BBS12, TCP1, CCT2, CCT3, CCT4, CCT5 and CCT8.

Its subcellular location is the cell projection. The protein resides in the cilium. Probable molecular chaperone that assists the folding of proteins upon ATP hydrolysis. Plays a role in the assembly of BBSome, a complex involved in ciliogenesis regulating transports vesicles to the cilia. Involved in adipogenic differentiation. This chain is BBSome complex assembly protein BBS10 (Bbs10), found in Mus musculus (Mouse).